The following is a 430-amino-acid chain: Trigger factor (430 aa).

The region spanning 157-242 is the PPIase FKBP-type domain; sequence GDLVALETWS…AVEVSEPVLP (86 aa).

It belongs to the FKBP-type PPIase family. Tig subfamily.

It is found in the cytoplasm. The enzyme catalyses [protein]-peptidylproline (omega=180) = [protein]-peptidylproline (omega=0). Involved in protein export. Acts as a chaperone by maintaining the newly synthesized protein in an open conformation. Functions as a peptidyl-prolyl cis-trans isomerase. This Xanthomonas euvesicatoria pv. vesicatoria (strain 85-10) (Xanthomonas campestris pv. vesicatoria) protein is Trigger factor.